We begin with the raw amino-acid sequence, 189 residues long: Flavin prenyltransferase UbiX (189 aa).

Residues Gly10–Ser12, Ser37, Ser88–Thr91, and Arg123 contribute to the FMN site. The dimethylallyl phosphate site is built by Tyr153 and Arg169.

The protein belongs to the UbiX/PAD1 family.

The catalysed reaction is dimethylallyl phosphate + FMNH2 = prenylated FMNH2 + phosphate. It participates in cofactor biosynthesis; ubiquinone biosynthesis. In terms of biological role, flavin prenyltransferase that catalyzes the synthesis of the prenylated FMN cofactor (prenyl-FMN) for 4-hydroxy-3-polyprenylbenzoic acid decarboxylase UbiD. The prenyltransferase is metal-independent and links a dimethylallyl moiety from dimethylallyl monophosphate (DMAP) to the flavin N5 and C6 atoms of FMN. The protein is Flavin prenyltransferase UbiX of Salmonella typhi.